Consider the following 127-residue polypeptide: Modulator protein MzrA (127 aa).

Over 1–11 the chain is Cytoplasmic; that stretch reads MRKPRVTLRHL. Residues 12-31 form a helical membrane-spanning segment; it reads AWSTMLLMVLGTGMLFWSAV. Topologically, residues 32-127 are periplasmic; sequence RQQESTLAIR…RLRDAPHRMG (96 aa).

Belongs to the MzrA family. In terms of assembly, interacts with EnvZ.

Its subcellular location is the cell inner membrane. In terms of biological role, modulates the activity of the EnvZ/OmpR two-component regulatory system, probably by directly modulating EnvZ enzymatic activity and increasing stability of phosphorylated OmpR. This Citrobacter rodentium (strain ICC168) (Citrobacter freundii biotype 4280) protein is Modulator protein MzrA.